Reading from the N-terminus, the 839-residue chain is Oxidation resistance protein 1 (839 aa).

The interval 38–91 (DYLREPAPGDPGCGPGELRPPSPTSPEGPDTGQKKTLDKKDGRRMSFQKPKGTI) is disordered. Basic and acidic residues predominate over residues 69 to 81 (GQKKTLDKKDGRR). At Ser83 the chain carries Phosphoserine. The region spanning 91–134 (IEYTVESRDSLNSIALKFDTTPNELVQLNKLFSRAVVTGQVLYV) is the LysM domain. Thr111 bears the Phosphothreonine mark. Over residues 140–161 (VSSVESSPSLSPVSPLSPTSSE) the composition is skewed to low complexity. The tract at residues 140 to 195 (VSSVESSPSLSPVSPLSPTSSEAEFDKTTTPDVVHPKEAPPSSTESSIRPARVVSS) is disordered. Residues 163 to 177 (EFDKTTTPDVVHPKE) are compositionally biased toward basic and acidic residues. Phosphoserine occurs at positions 194, 195, and 197. The GRAM domain maps to 206 to 261 (KFLKINCKYITNGKGTVSGVLLVTPNNIMFDPHKTDPLVQENGCEEYGIMCPMEEV). Phosphoserine occurs at positions 287, 327, and 329. Disordered stretches follow at residues 292-401 (CHSK…VGAL) and 415-540 (KEGD…SLLK). Phosphothreonine is present on Thr334. A Phosphoserine modification is found at Ser339. Positions 340 to 356 (PIREELPSSELRQEKSS) are enriched in basic and acidic residues. Composition is skewed to polar residues over residues 357 to 378 (DASSESVQTVSQIEVESLTAAS) and 387 to 397 (TNANSGRSSSE). Composition is skewed to basic and acidic residues over residues 433-450 (QSTDIKGQDNQDSFHHEN) and 469-497 (LTEKPTVLKDQQGKELKRDSETEVEELRK). Position 488 is a phosphoserine (Ser488). The segment covering 502-519 (HSMQQAKQQRDTIQQVAQ) has biased composition (polar residues). The interval 543–570 (RRHRLHKFLCLRVGKPMRKTFVSQASAT) is mediates oxidative antimutator activity. A disordered region spans residues 648–677 (TREDINSKQAAPAKADLEPESFRPNLSDPS). Positions 678-839 (ELLLPDQIEK…IQDIEIWAFE (162 aa)) constitute a TLDc domain.

Belongs to the OXR1 family.

Its subcellular location is the mitochondrion. Functionally, may be involved in protection from oxidative damage. The chain is Oxidation resistance protein 1 (Oxr1) from Rattus norvegicus (Rat).